Consider the following 234-residue polypeptide: UPF0173 metal-dependent hydrolase Rleg2_1519 (234 aa).

The protein belongs to the UPF0173 family.

This is UPF0173 metal-dependent hydrolase Rleg2_1519 from Rhizobium leguminosarum bv. trifolii (strain WSM2304).